Here is a 65-residue protein sequence, read N- to C-terminus: DNA-directed RNA polymerase subunit Rpo10 (65 aa).

The Zn(2+) site is built by cysteine 7, cysteine 10, cysteine 44, and cysteine 45.

It belongs to the archaeal Rpo10/eukaryotic RPB10 RNA polymerase subunit family. In terms of assembly, part of the RNA polymerase complex. Requires Zn(2+) as cofactor.

The protein resides in the cytoplasm. It carries out the reaction RNA(n) + a ribonucleoside 5'-triphosphate = RNA(n+1) + diphosphate. Functionally, DNA-dependent RNA polymerase (RNAP) catalyzes the transcription of DNA into RNA using the four ribonucleoside triphosphates as substrates. The protein is DNA-directed RNA polymerase subunit Rpo10 of Thermococcus onnurineus (strain NA1).